We begin with the raw amino-acid sequence, 216 residues long: Probable nicotinate-nucleotide adenylyltransferase (216 aa).

This sequence belongs to the NadD family.

The catalysed reaction is nicotinate beta-D-ribonucleotide + ATP + H(+) = deamido-NAD(+) + diphosphate. It participates in cofactor biosynthesis; NAD(+) biosynthesis; deamido-NAD(+) from nicotinate D-ribonucleotide: step 1/1. Catalyzes the reversible adenylation of nicotinate mononucleotide (NaMN) to nicotinic acid adenine dinucleotide (NaAD). The sequence is that of Probable nicotinate-nucleotide adenylyltransferase from Desulfatibacillum aliphaticivorans.